The following is a 724-amino-acid chain: Outer spore wall protein 2 (724 aa).

Disordered stretches follow at residues 407-427 and 477-497; these read NSGQ…KNRV and TSGG…YDDK.

The protein resides in the cytoplasm. It localises to the prospore membrane. May be involved in a late step of spore wall assembly. The protein is Outer spore wall protein 2 (OSW2) of Saccharomyces cerevisiae (strain ATCC 204508 / S288c) (Baker's yeast).